The sequence spans 332 residues: Ketol-acid reductoisomerase (NADP(+)) (332 aa).

The region spanning 1–182 is the KARI N-terminal Rossmann domain; it reads MATIYRDKDA…GGTRAGVLET (182 aa). NADP(+) contacts are provided by residues 25-28, Lys-49, Ser-51, and 83-86; these read YGNQ and DELQ. Residue His-108 is part of the active site. An NADP(+)-binding site is contributed by Gly-134. The 146-residue stretch at 183-328 folds into the KARI C-terminal knotted domain; the sequence is TFAEETETDL…AELRAMMPWL (146 aa). Residues Asp-191, Glu-195, Glu-227, and Glu-231 each contribute to the Mg(2+) site. Ser-252 serves as a coordination point for substrate.

The protein belongs to the ketol-acid reductoisomerase family. The cofactor is Mg(2+).

It catalyses the reaction (2R)-2,3-dihydroxy-3-methylbutanoate + NADP(+) = (2S)-2-acetolactate + NADPH + H(+). The enzyme catalyses (2R,3R)-2,3-dihydroxy-3-methylpentanoate + NADP(+) = (S)-2-ethyl-2-hydroxy-3-oxobutanoate + NADPH + H(+). It participates in amino-acid biosynthesis; L-isoleucine biosynthesis; L-isoleucine from 2-oxobutanoate: step 2/4. It functions in the pathway amino-acid biosynthesis; L-valine biosynthesis; L-valine from pyruvate: step 2/4. In terms of biological role, involved in the biosynthesis of branched-chain amino acids (BCAA). Catalyzes an alkyl-migration followed by a ketol-acid reduction of (S)-2-acetolactate (S2AL) to yield (R)-2,3-dihydroxy-isovalerate. In the isomerase reaction, S2AL is rearranged via a Mg-dependent methyl migration to produce 3-hydroxy-3-methyl-2-ketobutyrate (HMKB). In the reductase reaction, this 2-ketoacid undergoes a metal-dependent reduction by NADPH to yield (R)-2,3-dihydroxy-isovalerate. The polypeptide is Ketol-acid reductoisomerase (NADP(+)) (Methanothrix thermoacetophila (strain DSM 6194 / JCM 14653 / NBRC 101360 / PT) (Methanosaeta thermophila)).